The sequence spans 53 residues: Small polypeptide DEVIL 7 (53 aa).

Residues 1–16 (MREKYTKEEAVKNWEK) show a composition bias toward basic and acidic residues. Positions 1-28 (MREKYTKEEAVKNWEKKKNKPSSPKGVG) are disordered. The interval 22–53 (SSPKGVGEFLKKKKGRFYIIGKCITMLLCSHK) is required for DVL/RTFL small polypeptide activity. A helical membrane pass occupies residues 30–46 (FLKKKKGRFYIIGKCIT).

This sequence belongs to the DVL/RTFL small polypeptides family.

The protein resides in the cell membrane. In terms of biological role, small polypeptide acting as a regulatory molecule which coordinates cellular responses required for differentiation, growth and development, probably by restricting polar cell proliferation in lateral organs and coordinating socket cell recruitment and differentiation at trichome sites. This is Small polypeptide DEVIL 7 from Arabidopsis thaliana (Mouse-ear cress).